The chain runs to 241 residues: Triosephosphate isomerase (241 aa).

Substrate is bound at residue N9–K11. The active-site Electrophile is H96. Catalysis depends on E165, which acts as the Proton acceptor. Substrate is bound by residues G171, S204, and G225 to G226.

It belongs to the triosephosphate isomerase family. In terms of assembly, homodimer.

The protein localises to the cytoplasm. It catalyses the reaction D-glyceraldehyde 3-phosphate = dihydroxyacetone phosphate. It functions in the pathway carbohydrate biosynthesis; gluconeogenesis. Its pathway is carbohydrate degradation; glycolysis; D-glyceraldehyde 3-phosphate from glycerone phosphate: step 1/1. Involved in the gluconeogenesis. Catalyzes stereospecifically the conversion of dihydroxyacetone phosphate (DHAP) to D-glyceraldehyde-3-phosphate (G3P). The chain is Triosephosphate isomerase from Prochlorococcus marinus (strain MIT 9515).